The primary structure comprises 235 residues: Probable RNA 2'-phosphotransferase (235 aa).

The protein belongs to the KptA/TPT1 family.

Removes the 2'-phosphate from RNA via an intermediate in which the phosphate is ADP-ribosylated by NAD followed by a presumed transesterification to release the RNA and generate ADP-ribose 1''-2''-cyclic phosphate (APPR&gt;P). May function as an ADP-ribosylase. This Thermoplasma volcanium (strain ATCC 51530 / DSM 4299 / JCM 9571 / NBRC 15438 / GSS1) protein is Probable RNA 2'-phosphotransferase.